A 484-amino-acid chain; its full sequence is Glycogen synthase (484 aa).

Lys15 provides a ligand contact to ADP-alpha-D-glucose.

This sequence belongs to the glycosyltransferase 1 family. Bacterial/plant glycogen synthase subfamily.

The catalysed reaction is [(1-&gt;4)-alpha-D-glucosyl](n) + ADP-alpha-D-glucose = [(1-&gt;4)-alpha-D-glucosyl](n+1) + ADP + H(+). It functions in the pathway glycan biosynthesis; glycogen biosynthesis. Synthesizes alpha-1,4-glucan chains using ADP-glucose. This Bacillus licheniformis (strain ATCC 14580 / DSM 13 / JCM 2505 / CCUG 7422 / NBRC 12200 / NCIMB 9375 / NCTC 10341 / NRRL NRS-1264 / Gibson 46) protein is Glycogen synthase.